A 124-amino-acid polypeptide reads, in one-letter code: Small ribosomal subunit protein uS12 (124 aa).

Asp-89 carries the 3-methylthioaspartic acid modification. The tract at residues 104–124 (SAGVQNRNRGRSKYGTKRPKK) is disordered. Basic residues predominate over residues 111-124 (NRGRSKYGTKRPKK).

The protein belongs to the universal ribosomal protein uS12 family. Part of the 30S ribosomal subunit. Contacts proteins S8 and S17. May interact with IF1 in the 30S initiation complex.

Its function is as follows. With S4 and S5 plays an important role in translational accuracy. Functionally, interacts with and stabilizes bases of the 16S rRNA that are involved in tRNA selection in the A site and with the mRNA backbone. Located at the interface of the 30S and 50S subunits, it traverses the body of the 30S subunit contacting proteins on the other side and probably holding the rRNA structure together. The combined cluster of proteins S8, S12 and S17 appears to hold together the shoulder and platform of the 30S subunit. The polypeptide is Small ribosomal subunit protein uS12 (Pelotomaculum thermopropionicum (strain DSM 13744 / JCM 10971 / SI)).